A 420-amino-acid polypeptide reads, in one-letter code: Glucose-1-phosphate adenylyltransferase (420 aa).

Alpha-D-glucose 1-phosphate-binding positions include tyrosine 107, glycine 172, 187–188 (EK), and serine 205.

The protein belongs to the bacterial/plant glucose-1-phosphate adenylyltransferase family. Homotetramer.

The catalysed reaction is alpha-D-glucose 1-phosphate + ATP + H(+) = ADP-alpha-D-glucose + diphosphate. The protein operates within glycan biosynthesis; glycogen biosynthesis. Functionally, involved in the biosynthesis of ADP-glucose, a building block required for the elongation reactions to produce glycogen. Catalyzes the reaction between ATP and alpha-D-glucose 1-phosphate (G1P) to produce pyrophosphate and ADP-Glc. The sequence is that of Glucose-1-phosphate adenylyltransferase from Rhizobium johnstonii (strain DSM 114642 / LMG 32736 / 3841) (Rhizobium leguminosarum bv. viciae).